Reading from the N-terminus, the 224-residue chain is Imidazole glycerol phosphate synthase subunit HisH (224 aa).

Residues 5–214 (DTIIIDTGCA…MKMNAGSFAG (210 aa)) enclose the Glutamine amidotransferase type-1 domain. Cys80 (nucleophile) is an active-site residue. Active-site residues include His189 and Glu191.

Heterodimer of HisH and HisF.

The protein localises to the cytoplasm. It catalyses the reaction 5-[(5-phospho-1-deoxy-D-ribulos-1-ylimino)methylamino]-1-(5-phospho-beta-D-ribosyl)imidazole-4-carboxamide + L-glutamine = D-erythro-1-(imidazol-4-yl)glycerol 3-phosphate + 5-amino-1-(5-phospho-beta-D-ribosyl)imidazole-4-carboxamide + L-glutamate + H(+). The enzyme catalyses L-glutamine + H2O = L-glutamate + NH4(+). It functions in the pathway amino-acid biosynthesis; L-histidine biosynthesis; L-histidine from 5-phospho-alpha-D-ribose 1-diphosphate: step 5/9. Functionally, IGPS catalyzes the conversion of PRFAR and glutamine to IGP, AICAR and glutamate. The HisH subunit catalyzes the hydrolysis of glutamine to glutamate and ammonia as part of the synthesis of IGP and AICAR. The resulting ammonia molecule is channeled to the active site of HisF. This chain is Imidazole glycerol phosphate synthase subunit HisH, found in Shewanella loihica (strain ATCC BAA-1088 / PV-4).